Consider the following 384-residue polypeptide: 8-amino-7-oxononanoate synthase (384 aa).

Arg21 serves as a coordination point for substrate. Position 108–109 (108–109 (GF)) interacts with pyridoxal 5'-phosphate. His133 serves as a coordination point for substrate. The pyridoxal 5'-phosphate site is built by Ser179, His207, and Thr233. Lys236 carries the post-translational modification N6-(pyridoxal phosphate)lysine. Substrate is bound at residue Thr352.

It belongs to the class-II pyridoxal-phosphate-dependent aminotransferase family. BioF subfamily. In terms of assembly, homodimer. The cofactor is pyridoxal 5'-phosphate.

It carries out the reaction 6-carboxyhexanoyl-[ACP] + L-alanine + H(+) = (8S)-8-amino-7-oxononanoate + holo-[ACP] + CO2. Its pathway is cofactor biosynthesis; biotin biosynthesis. In terms of biological role, catalyzes the decarboxylative condensation of pimeloyl-[acyl-carrier protein] and L-alanine to produce 8-amino-7-oxononanoate (AON), [acyl-carrier protein], and carbon dioxide. This is 8-amino-7-oxononanoate synthase from Escherichia coli O6:K15:H31 (strain 536 / UPEC).